A 138-amino-acid polypeptide reads, in one-letter code: Large ribosomal subunit protein bL19 (138 aa).

The protein belongs to the bacterial ribosomal protein bL19 family.

Its function is as follows. This protein is located at the 30S-50S ribosomal subunit interface and may play a role in the structure and function of the aminoacyl-tRNA binding site. The chain is Large ribosomal subunit protein bL19 from Leptospira interrogans serogroup Icterohaemorrhagiae serovar Lai (strain 56601).